The sequence spans 258 residues: MTVEGRVVLITGAAGGIGKVLCKMFTELGDRVAGIDIVDPSKVQDAALALQADVSKADQIETAIEKVIQTLGPIDVLINNAGLADDTPFEQLSHESWDHDVSLVLRGNYLTQRYVIPHMAKQGKGGSIVNIGSVNGHIYLGSPAYSAAKAGLENLTKALAVRYGPLGIRVNVCAPGTIWSPAWDERFKKHPDVGDRMKRWYPVGRLGTPEDVARAVIFLADSKNSFITGTTLYVDGGLLAGNPCLIQDIYSENNNFVF.

NADP(+) contacts are provided by Ile-17, Asp-53, Asn-80, Arg-113, Tyr-145, Lys-149, Ile-178, and Ser-180. The active-site Proton donor is the Tyr-145. Lys-149 acts as the Lowers pKa of active site Tyr in catalysis.

It belongs to the short-chain dehydrogenases/reductases (SDR) family.

The protein localises to the cytoplasm. It localises to the nucleus. This is an uncharacterized protein from Schizosaccharomyces pombe (strain 972 / ATCC 24843) (Fission yeast).